A 71-amino-acid chain; its full sequence is SPI-2 type 3 secretion system needle filament protein (71 aa).

Belongs to the SctF family. In terms of assembly, the core secretion machinery of the T3SS is composed of approximately 20 different proteins, including cytoplasmic components, a base, an export apparatus and a needle. This subunit polymerizes and forms the helical needle filament.

The protein localises to the secreted. Its subcellular location is the cell surface. Component of the type III secretion system (T3SS), also called injectisome, which is used to inject bacterial effector proteins into eukaryotic host cells. SsaG/SctF2 forms the external needle filament that protrudes from the bacterial surface. In terms of biological role, during infection, can induce innate immune responses. The needle proteins interact with host TLR2 or TLR4, and induce signaling by NF-kappa-B and/or AP-1. This activation is MyD88 dependent and results in increased expression of cytokines, including TNF-alpha, IL-6 and IL-8. This is SPI-2 type 3 secretion system needle filament protein from Salmonella typhimurium (strain LT2 / SGSC1412 / ATCC 700720).